The sequence spans 176 residues: Large ribosomal subunit protein uL6 (176 aa).

It belongs to the universal ribosomal protein uL6 family. Part of the 50S ribosomal subunit.

Functionally, this protein binds to the 23S rRNA, and is important in its secondary structure. It is located near the subunit interface in the base of the L7/L12 stalk, and near the tRNA binding site of the peptidyltransferase center. This Paraburkholderia phytofirmans (strain DSM 17436 / LMG 22146 / PsJN) (Burkholderia phytofirmans) protein is Large ribosomal subunit protein uL6.